The chain runs to 755 residues: 1,4-alpha-glucan branching enzyme GlgB (755 aa).

The active-site Nucleophile is the Asp435. Catalysis depends on Glu488, which acts as the Proton donor.

The protein belongs to the glycosyl hydrolase 13 family. GlgB subfamily. Monomer.

It catalyses the reaction Transfers a segment of a (1-&gt;4)-alpha-D-glucan chain to a primary hydroxy group in a similar glucan chain.. The protein operates within glycan biosynthesis; glycogen biosynthesis. In terms of biological role, catalyzes the formation of the alpha-1,6-glucosidic linkages in glycogen by scission of a 1,4-alpha-linked oligosaccharide from growing alpha-1,4-glucan chains and the subsequent attachment of the oligosaccharide to the alpha-1,6 position. The polypeptide is 1,4-alpha-glucan branching enzyme GlgB (Vibrio parahaemolyticus serotype O3:K6 (strain RIMD 2210633)).